Here is a 341-residue protein sequence, read N- to C-terminus: MKALSKLKPEEGIWMVDAPKPEMGHNDLLIKIRKTAICGTDVHIYNWDEWSQKTIPVPMIAGHEYVGEVVDVGQEVRGFSIGDRVSGEGHITCGHCRNCRAGRTHLCRNTSGVGVNRDGAFAEYLVLPAFNAFKIPADIPDDLAAIFDPFGNAVHTALSFDLVGEDVLITGAGPIGIMAAAVCKHVGARHVVITDVNEYRLDLARKMGATRAVNVATENLKDVMKELGMTEGFDVGLEMSGVPSAFHAMLDTMNHGGKIAMLGIPGGEMAIDWSKIIFKGLIIKGIYGREMFETWYKMASLIQSGLDLSPIITHHFSIDDFQKGFDAMRSGQSGKVILNWD.

Cys-38 is a binding site for Zn(2+). Residues Thr-40 and His-43 each act as charge relay system in the active site. Zn(2+) contacts are provided by His-63, Glu-64, Cys-93, Cys-96, Cys-99, and Cys-107. Residues Ile-175, Asp-195, Arg-200, 262–264 (LGI), and 286–287 (IY) contribute to the NAD(+) site.

Belongs to the zinc-containing alcohol dehydrogenase family. Homotetramer. The cofactor is Zn(2+).

The protein resides in the cytoplasm. The catalysed reaction is L-threonine + NAD(+) = (2S)-2-amino-3-oxobutanoate + NADH + H(+). It participates in amino-acid degradation; L-threonine degradation via oxydo-reductase pathway; glycine from L-threonine: step 1/2. Functionally, catalyzes the NAD(+)-dependent oxidation of L-threonine to 2-amino-3-ketobutyrate. This chain is L-threonine 3-dehydrogenase, found in Shewanella frigidimarina (strain NCIMB 400).